Here is a 383-residue protein sequence, read N- to C-terminus: Na(+)/H(+) antiporter NhaA (383 aa).

The next 11 helical transmembrane spans lie at 19–39 (AGGV…NSPL), 56–76 (VLHG…GLEI), 92–112 (ILPG…FLAL), 122–142 (GWAV…ALLG), 151–171 (IFLT…IALF), 174–194 (AKLS…LAAL), 212–232 (LWGA…ALAL), 255–275 (VGYG…FAGL), 292–312 (LLFG…WLGF), 326–346 (GVAV…ALAF), and 356–376 (VKVG…LVLL).

The protein belongs to the NhaA Na(+)/H(+) (TC 2.A.33) antiporter family.

Its subcellular location is the cell inner membrane. It carries out the reaction Na(+)(in) + 2 H(+)(out) = Na(+)(out) + 2 H(+)(in). In terms of biological role, na(+)/H(+) antiporter that extrudes sodium in exchange for external protons. The polypeptide is Na(+)/H(+) antiporter NhaA (Paramagnetospirillum magneticum (strain ATCC 700264 / AMB-1) (Magnetospirillum magneticum)).